We begin with the raw amino-acid sequence, 114 residues long: MAVNIYDTANQLEQELRQTKEFKELKVAYDTMKTNDSAFSLFKDFQEVQMQLSQKQMNGEELTDDEVQKAHDLADKVGNVDEIKSLMGKERNLNQLMNDLNQIITKPVQALYQN.

It belongs to the UPF0342 family.

The chain is UPF0342 protein lp_1415 from Lactiplantibacillus plantarum (strain ATCC BAA-793 / NCIMB 8826 / WCFS1) (Lactobacillus plantarum).